A 309-amino-acid chain; its full sequence is DDRGK domain-containing protein 1 (309 aa).

At 1-2 the chain is on the lumenal side; sequence MD. The helical transmembrane segment at 3 to 23 threads the bilayer; that stretch reads LIILVGIASALLVVILTIFFL. The Cytoplasmic portion of the chain corresponds to 24–309; that stretch reads QKKKGGTEAK…VSAGAGEGSS (286 aa). Positions 30–178 are disordered; sequence TEAKEAAAPP…RLVKEERERK (149 aa). Residues 53-84 are compositionally biased toward low complexity; that stretch reads RRAQIARNQRNRLRQNAPAAAPAAAAALQAAD. A compositionally biased stretch (acidic residues) spans 85–95; sequence AEGDNDDENPD. Basic and acidic residues predominate over residues 107-178; sequence LDEKMGAKKR…RLVKEERERK (72 aa).

This sequence belongs to the DDRGK1 family. As to quaternary structure, interacts with Atg9; the interaction is transient.

The protein localises to the endoplasmic reticulum membrane. In terms of biological role, substrate adapter for ufmylation, the covalent attachment of the ubiquitin-like modifier UFM1 to substrate proteins. Required for ufmylation of Atg9; protects the nervous system during aging, possibly by stabilizing Atg9 and supporting its function. In Drosophila persimilis (Fruit fly), this protein is DDRGK domain-containing protein 1.